A 316-amino-acid chain; its full sequence is MLRLLFTLVLLALYGPSVDASRDYVHVRLLSYRGDPLVFKHTFSGVRRPFTELGWAACRDWDSMHCTPFWSTDLEQMTDSVRRYSTVSPGKEVTLQLHGNQTVQPSFLSFTCRLQLEPVVENVGLYVAYVVNDGERPQQFFTPQVDVVRFALYLETLSRIVEPLESGRLTVEFDTPDLALAPDLVSSLFVAGHGETDFYMNWTLRRSQTHYLEEMALQVEILKPRGVRHRAIIHHPKLQPGVGLWIDFCVYRYNARLTRGYVRYTLSPKARLPAKAEGWLVSLDRFIVQYLNTLLITMMAAIWARVLITYLVSRRR.

Positions 1-20 (MLRLLFTLVLLALYGPSVDA) are cleaved as a signal peptide. A helical transmembrane segment spans residues 286–308 (FIVQYLNTLLITMMAAIWARVLI).

As to quaternary structure, interacts with host SEL1L.

The protein localises to the host endoplasmic reticulum membrane. In terms of biological role, chaperone protein that plays an important role in HCMV tropism. Cooperates with UL116 to regulate the abundance of gH-gL complexes in virion. Favors the incorporation of gL into virions once UL116 has regulated the early folding steps of virion assembly. Interacts with the host ERAD machinery and slows gO decay which would otherwise be constitutively degraded. Reorganizes the host endoplasmic reticulum and activates the unfolded protein response. Additionally, plays a role in the evasion of antiviral immune response by down-regulating cell surface expression of host CD58. Mechanistically, interacts with host CD58 and retains its immature form intracellularly. The capacity to cause endoplasmic reticulum reorganization and the intracellular retention of host CD58 are functionally independent properties. The protein is Membrane protein UL148 (UL148) of Human cytomegalovirus (strain Merlin) (HHV-5).